A 208-amino-acid chain; its full sequence is Thymidylate kinase (208 aa).

10–17 provides a ligand contact to ATP; the sequence is GLEGAGKS.

This sequence belongs to the thymidylate kinase family.

It carries out the reaction dTMP + ATP = dTDP + ADP. Its function is as follows. Phosphorylation of dTMP to form dTDP in both de novo and salvage pathways of dTTP synthesis. The polypeptide is Thymidylate kinase (Glaesserella parasuis serovar 5 (strain SH0165) (Haemophilus parasuis)).